A 194-amino-acid polypeptide reads, in one-letter code: Holliday junction branch migration complex subunit RuvA (194 aa).

The tract at residues 1–64 (MISSLNGILE…EDALSLFGFA (64 aa)) is domain I. Positions 65–143 (TTEELSLFET…KNWEAGVLSQ (79 aa)) are domain II. The segment at 144 to 149 (VTEANS) is flexible linker. A domain III region spans residues 149-194 (SDILATLTALGYSSSEAAKAISSLGDNGDLPLEERIKLALNYFNNK).

Belongs to the RuvA family. As to quaternary structure, homotetramer. Forms an RuvA(8)-RuvB(12)-Holliday junction (HJ) complex. HJ DNA is sandwiched between 2 RuvA tetramers; dsDNA enters through RuvA and exits via RuvB. An RuvB hexamer assembles on each DNA strand where it exits the tetramer. Each RuvB hexamer is contacted by two RuvA subunits (via domain III) on 2 adjacent RuvB subunits; this complex drives branch migration. In the full resolvosome a probable DNA-RuvA(4)-RuvB(12)-RuvC(2) complex forms which resolves the HJ.

The protein localises to the cytoplasm. Its function is as follows. The RuvA-RuvB-RuvC complex processes Holliday junction (HJ) DNA during genetic recombination and DNA repair, while the RuvA-RuvB complex plays an important role in the rescue of blocked DNA replication forks via replication fork reversal (RFR). RuvA specifically binds to HJ cruciform DNA, conferring on it an open structure. The RuvB hexamer acts as an ATP-dependent pump, pulling dsDNA into and through the RuvAB complex. HJ branch migration allows RuvC to scan DNA until it finds its consensus sequence, where it cleaves and resolves the cruciform DNA. The sequence is that of Holliday junction branch migration complex subunit RuvA from Dehalococcoides mccartyi (strain CBDB1).